A 1164-amino-acid polypeptide reads, in one-letter code: Integrin alpha-5 (1164 aa).

Basic and acidic residues predominate over residues 1–14 (MREEGGGSREKEGE). The interval 1-119 (MREEGGGSRE…MGSRTPGSPL (119 aa)) is disordered. The span at 81 to 90 (LLPALSHSPL) shows a compositional bias: low complexity. The FG-GAP 1 repeat unit spans residues 156-221 (NLDAEAPAVL…CPWGTSPAQC (66 aa)). Asparagine 197 carries N-linked (GlcNAc...) asparagine glycosylation. A disulfide bridge connects residues cysteine 212 and cysteine 221. A Phosphoserine modification is found at serine 240. FG-GAP repeat units lie at residues 241 to 301 (SEGE…QILE), 306 to 358 (RSDF…AESY), 372 to 424 (QTRQ…GSDI), 425 to 490 (RSLY…GMEP), 491 to 550 (TPTL…GLAS), and 554 to 617 (QVLL…IFPA). A disulfide bridge links cysteine 269 with cysteine 289. Residue asparagine 295 is glycosylated (N-linked (GlcNAc...) asparagine). An intrachain disulfide couples cysteine 305 to cysteine 318. A protein is bound by residues glutamine 375 and aspartate 382. Glutamate 393, serine 395, aspartate 397, and aspartate 401 together coordinate Ca(2+). 3 N-linked (GlcNAc...) asparagine glycosylation sites follow: asparagine 410, asparagine 420, and asparagine 429. The Ca(2+) site is built by aspartate 447, asparagine 449, aspartate 451, leucine 453, aspartate 455, aspartate 514, aspartate 516, aspartate 518, tyrosine 520, aspartate 522, aspartate 578, aspartate 580, asparagine 582, tyrosine 584, and aspartate 586. Residues cysteine 626 and cysteine 635 are joined by a disulfide bond. N-linked (GlcNAc...) asparagine glycans are attached at residues asparagine 637, asparagine 643, asparagine 706, and asparagine 722. Residues cysteine 641 and cysteine 697 are joined by a disulfide bond. Cysteine 758 and cysteine 764 are joined by a disulfide. N-linked (GlcNAc...) asparagine glycans are attached at residues asparagine 788, asparagine 825, asparagine 837, asparagine 886, and asparagine 982. Cysteine 831 and cysteine 844 are joined by a disulfide. 3 disulfide bridges follow: cysteine 962-cysteine 1072, cysteine 983-cysteine 1036, and cysteine 1026-cysteine 1031. Residues 983–1022 (CTTSHPPNPEGLELDPEGSQHHRLQRRDVPGRSPASSGPQ) are disordered. The helical transmembrane segment at 1114 to 1134 (LWIIILAILIGLLLLGLLIYI) threads the bilayer. The Cytoplasmic portion of the chain corresponds to 1135–1164 (LYKLGFFKRSLPYGTAMEKAQLKPPATSDA). Residues 1136 to 1143 (YKLGFFKR) are interaction with HPS5. A GFFKR motif motif is present at residues 1139–1143 (GFFKR).

The protein belongs to the integrin alpha chain family. In terms of assembly, heterodimer of an alpha and a beta subunit. The alpha subunit is composed of a heavy and a light chain linked by a disulfide bond. Alpha-5 associates with beta-1. Interacts with NISCH. Interacts with HPS5. Interacts with RAB21 and COMP. Interacts with CIB1. ITGA5:ITGB1 interacts with CCN3. ITGA5:ITGB1 interacts with FBN1. ITGA5:ITGB1 interacts with IL1B. ITGA5:ITGB1 interacts with ACE2. ITGA5:ITGB1 interacts with SELP. Interacts with ANGPT2. ITGA5:ITGB1 interacts with IGFBP2. ITGA5:ITGB1 interacts with IGFBP1. In terms of processing, proteolytic cleavage by PCSK5 mediates activation of the precursor.

The protein resides in the cell membrane. Its subcellular location is the cell junction. The protein localises to the focal adhesion. Integrin alpha-5/beta-1 (ITGA5:ITGB1) is a receptor for fibronectin and fibrinogen. It recognizes the sequence R-G-D in its ligands. ITGA5:ITGB1 binds to PLA2G2A via a site (site 2) which is distinct from the classical ligand-binding site (site 1) and this induces integrin conformational changes and enhanced ligand binding to site 1. ITGA5:ITGB1 acts as a receptor for fibrillin-1 (FBN1) and mediates R-G-D-dependent cell adhesion to FBN1. ITGA5:ITGB1 acts as a receptor for fibronectin (FN1) and mediates R-G-D-dependent cell adhesion to FN1. ITGA5:ITGB1 is a receptor for IL1B and binding is essential for IL1B signaling. ITGA5:ITGB3 is a receptor for soluble CD40LG and is required for CD40/CD40LG signaling. The chain is Integrin alpha-5 (ITGA5) from Bos taurus (Bovine).